We begin with the raw amino-acid sequence, 120 residues long: Chaperonin GroEL (120 aa).

23–27 (DGTTT) contacts ATP.

The protein belongs to the chaperonin (HSP60) family. As to quaternary structure, forms a cylinder of 14 subunits composed of two heptameric rings stacked back-to-back. Interacts with the co-chaperonin GroES.

It localises to the cytoplasm. It carries out the reaction ATP + H2O + a folded polypeptide = ADP + phosphate + an unfolded polypeptide.. Its function is as follows. Together with its co-chaperonin GroES, plays an essential role in assisting protein folding. The GroEL-GroES system forms a nano-cage that allows encapsulation of the non-native substrate proteins and provides a physical environment optimized to promote and accelerate protein folding. This Mycolicibacterium rhodesiae (Mycobacterium rhodesiae) protein is Chaperonin GroEL.